A 332-amino-acid chain; its full sequence is 3'(2'),5'-bisphosphate nucleotidase (332 aa).

Asp49 acts as the Proton acceptor in catalysis. Residues Glu73, Asp129, Ile131, and Asp132 each coordinate Mg(2+). Thr134 acts as the Proton acceptor in catalysis. The adenosine 3',5'-bisphosphate site is built by Thr134, Ser245, Lys248, Arg262, and Asp274. Positions 245, 248, 262, and 274 each coordinate AMP. Asp274 contacts Mg(2+).

Belongs to the inositol monophosphatase superfamily. Mg(2+) is required as a cofactor.

It catalyses the reaction 3'-phosphoadenylyl sulfate + H2O = adenosine 5'-phosphosulfate + phosphate. It carries out the reaction adenosine 3',5'-bisphosphate + H2O = AMP + phosphate. The catalysed reaction is adenosine 2',5'-bisphosphate + H2O = AMP + phosphate. The enzyme catalyses 1D-myo-inositol 1,4-bisphosphate + H2O = 1D-myo-inositol 4-phosphate + phosphate. It catalyses the reaction 1D-myo-inositol 1,3,4-trisphosphate + H2O = 1D-myo-inositol 3,4-bisphosphate + phosphate. Its function is as follows. Phosphatase that converts adenosine 3'-phosphate 5'-phosphosulfate (PAPS) to adenosine 5'-phosphosulfate (APS) and 3'(2')-phosphoadenosine 5'-phosphate (PAP) to AMP. Is also able to hydrolyze inositol 1,4-bisphosphate and inositol 1,3,4-trisphosphate. The protein is 3'(2'),5'-bisphosphate nucleotidase of Dictyostelium discoideum (Social amoeba).